The chain runs to 477 residues: Argininosuccinate lyase (477 aa).

This sequence belongs to the lyase 1 family. Argininosuccinate lyase subfamily.

It localises to the cytoplasm. It carries out the reaction 2-(N(omega)-L-arginino)succinate = fumarate + L-arginine. The protein operates within amino-acid biosynthesis; L-arginine biosynthesis; L-arginine from L-ornithine and carbamoyl phosphate: step 3/3. The protein is Argininosuccinate lyase of Corynebacterium glutamicum (strain R).